We begin with the raw amino-acid sequence, 275 residues long: Large ribosomal subunit protein uL2c (275 aa).

Disordered regions lie at residues 36-56 and 224-275; these read KNHRRQGRNSRGIITSRHRGK and VMNP…RKRK. The segment covering 255-275 has biased composition (basic residues); it reads LGRKTRKKPKYSNRYILRKRK.

It belongs to the universal ribosomal protein uL2 family. Part of the 50S ribosomal subunit.

It localises to the plastid. The protein localises to the chloroplast. The protein is Large ribosomal subunit protein uL2c (rpl2) of Gracilaria tenuistipitata var. liui (Red alga).